Consider the following 248-residue polypeptide: Ribosomal RNA small subunit methyltransferase J (248 aa).

S-adenosyl-L-methionine is bound by residues 101-102 (RD), 117-118 (ER), 153-154 (SS), and Asp171.

This sequence belongs to the methyltransferase superfamily. RsmJ family.

It is found in the cytoplasm. The enzyme catalyses guanosine(1516) in 16S rRNA + S-adenosyl-L-methionine = N(2)-methylguanosine(1516) in 16S rRNA + S-adenosyl-L-homocysteine + H(+). Its function is as follows. Specifically methylates the guanosine in position 1516 of 16S rRNA. The polypeptide is Ribosomal RNA small subunit methyltransferase J (Proteus mirabilis (strain HI4320)).